A 132-amino-acid chain; its full sequence is Nickel-responsive regulator (132 aa).

Positions 76, 87, 89, and 95 each coordinate Ni(2+).

This sequence belongs to the transcriptional regulatory CopG/NikR family. Homotetramer. Ni(2+) is required as a cofactor.

In terms of biological role, transcriptional repressor of the nikABCDE operon. Is active in the presence of excessive concentrations of intracellular nickel. This is Nickel-responsive regulator from Klebsiella pneumoniae subsp. pneumoniae (strain ATCC 700721 / MGH 78578).